Consider the following 288-residue polypeptide: Centromere protein P (288 aa).

Positions 1-71 (MDAELAEVRA…HLESELSFLS (71 aa)) form a coiled coil. The residue at position 38 (Ser-38) is a Phosphoserine.

It belongs to the CENP-P/CTF19 family. As to quaternary structure, component of the CENPA-CAD complex, composed of CENPI, CENPK, CENPL, CENPO, CENPP, CENPQ, CENPR and CENPS. The CENPA-CAD complex interacts with the CENPA-NAC complex, at least composed of CENPA, CENPC, CENPH, CENPM, CENPN, CENPT and CENPU.

It localises to the nucleus. The protein localises to the chromosome. Its subcellular location is the centromere. Functionally, component of the CENPA-CAD (nucleosome distal) complex, a complex recruited to centromeres which is involved in assembly of kinetochore proteins, mitotic progression and chromosome segregation. May be involved in incorporation of newly synthesized CENPA into centromeres via its interaction with the CENPA-NAC complex. The sequence is that of Centromere protein P (CENPP) from Homo sapiens (Human).